A 126-amino-acid chain; its full sequence is Probable prefoldin subunit 4 (126 aa).

The protein belongs to the prefoldin subunit beta family. In terms of assembly, heterohexamer of two PFD-alpha type and four PFD-beta type subunits.

Functionally, binds specifically to cytosolic chaperonin (c-CPN) and transfers target proteins to it. Binds to nascent polypeptide chain and promotes folding in an environment in which there are many competing pathways for nonnative proteins. This Caenorhabditis elegans protein is Probable prefoldin subunit 4 (pfd-4).